We begin with the raw amino-acid sequence, 212 residues long: Ribonuclease HII (212 aa).

Positions 1–199 (MIGGIDEAGR…VGGRIGLGRN (199 aa)) constitute an RNase H type-2 domain. Residues Asp-6, Glu-7, and Asp-101 each contribute to the a divalent metal cation site.

It belongs to the RNase HII family. It depends on Mn(2+) as a cofactor. Mg(2+) serves as cofactor.

It localises to the cytoplasm. The catalysed reaction is Endonucleolytic cleavage to 5'-phosphomonoester.. Functionally, endonuclease that specifically degrades the RNA of RNA-DNA hybrids. The polypeptide is Ribonuclease HII (Pyrobaculum aerophilum (strain ATCC 51768 / DSM 7523 / JCM 9630 / CIP 104966 / NBRC 100827 / IM2)).